We begin with the raw amino-acid sequence, 523 residues long: NAD(P)H-quinone oxidoreductase subunit 2 (523 aa).

14 helical membrane passes run 29 to 49 (AIAP…VDLA), 57 to 77 (WVPP…AQQW), 94 to 114 (LAIA…LISW), 123 to 143 (PIGE…LLCG), 147 to 167 (LVSV…LAGY), 182 to 202 (LLVG…LYGL), 221 to 243 (PLAA…AVPF), 255 to 275 (PTPV…ALAL), 291 to 311 (LLFT…ALAQ), 317 to 337 (MLAY…VCGT), 345 to 365 (VLYM…IILF), 389 to 409 (LGLS…GFFG), 424 to 444 (LLVV…ISVI), and 477 to 497 (IALV…NPLF).

It belongs to the complex I subunit 2 family. As to quaternary structure, NDH-1 can be composed of about 15 different subunits; different subcomplexes with different compositions have been identified which probably have different functions.

Its subcellular location is the cellular thylakoid membrane. The enzyme catalyses a plastoquinone + NADH + (n+1) H(+)(in) = a plastoquinol + NAD(+) + n H(+)(out). The catalysed reaction is a plastoquinone + NADPH + (n+1) H(+)(in) = a plastoquinol + NADP(+) + n H(+)(out). In terms of biological role, NDH-1 shuttles electrons from an unknown electron donor, via FMN and iron-sulfur (Fe-S) centers, to quinones in the respiratory and/or the photosynthetic chain. The immediate electron acceptor for the enzyme in this species is believed to be plastoquinone. Couples the redox reaction to proton translocation, and thus conserves the redox energy in a proton gradient. Cyanobacterial NDH-1 also plays a role in inorganic carbon-concentration. The protein is NAD(P)H-quinone oxidoreductase subunit 2 of Prochlorococcus marinus (strain MIT 9303).